Here is a 160-residue protein sequence, read N- to C-terminus: Nucleotide-binding protein BAV0791 (160 aa).

This sequence belongs to the YajQ family.

In terms of biological role, nucleotide-binding protein. In Bordetella avium (strain 197N), this protein is Nucleotide-binding protein BAV0791.